Consider the following 399-residue polypeptide: Coenzyme A biosynthesis bifunctional protein CoaBC (399 aa).

Residues 1-190 (MQTLAGKKIL…FQPKVLEGKS (190 aa)) form a phosphopantothenoylcysteine decarboxylase region. C159 acts as the Proton donor in catalysis. The segment at 191-399 (ILISAGPTRE…KILEKMRELM (209 aa)) is phosphopantothenate--cysteine ligase. Residues D279, K289, 307 to 310 (PDIV), F326, K340, and K344 contribute to the CTP site.

In the N-terminal section; belongs to the HFCD (homo-oligomeric flavin containing Cys decarboxylase) superfamily. This sequence in the C-terminal section; belongs to the PPC synthetase family. It depends on Mg(2+) as a cofactor. FMN is required as a cofactor.

It carries out the reaction N-[(R)-4-phosphopantothenoyl]-L-cysteine + H(+) = (R)-4'-phosphopantetheine + CO2. The enzyme catalyses (R)-4'-phosphopantothenate + L-cysteine + CTP = N-[(R)-4-phosphopantothenoyl]-L-cysteine + CMP + diphosphate + H(+). The protein operates within cofactor biosynthesis; coenzyme A biosynthesis; CoA from (R)-pantothenate: step 2/5. It participates in cofactor biosynthesis; coenzyme A biosynthesis; CoA from (R)-pantothenate: step 3/5. Functionally, catalyzes two sequential steps in the biosynthesis of coenzyme A. In the first step cysteine is conjugated to 4'-phosphopantothenate to form 4-phosphopantothenoylcysteine. In the second step the latter compound is decarboxylated to form 4'-phosphopantotheine. This is Coenzyme A biosynthesis bifunctional protein CoaBC from Vibrio parahaemolyticus serotype O3:K6 (strain RIMD 2210633).